The following is a 109-amino-acid chain: Putative double-stranded DNA mimic protein YciU (109 aa).

The protein belongs to the putative dsDNA mimic protein family.

May act as a double-stranded DNA (dsDNA) mimic. Probably regulates the activity of a dsDNA-binding protein. The chain is Putative double-stranded DNA mimic protein YciU from Shigella boydii serotype 18 (strain CDC 3083-94 / BS512).